A 1005-amino-acid chain; its full sequence is Helicase-like transcription factor (1005 aa).

At R27 the chain carries Omega-N-methylarginine. A DNA-binding region spans residues 38–287; it reads EFQDIIPPDD…FSEKDQPENV (250 aa). A Glycyl lysine isopeptide (Lys-Gly) (interchain with G-Cter in SUMO2) cross-link involves residue K112. Y195 carries the phosphotyrosine; by JAK2 modification. Residue K211 forms a Glycyl lysine isopeptide (Lys-Gly) (interchain with G-Cter in SUMO2) linkage. An ATP-binding site is contributed by 294-301; it reads DDMGLGKT. The span at 325 to 361 shows a compositional bias: basic and acidic residues; sequence KNQVKKECNSSESDKPGRKDTIKKTDGLSKEGSRYSE. The tract at residues 325–385 is disordered; sequence KNQVKKECNS…SELSSSQPKR (61 aa). The segment covering 373–382 has biased composition (polar residues); sequence YSMSELSSSQ. Phosphoserine is present on residues S395, S396, and S398. Positions 427-603 constitute a Helicase ATP-binding domain; it reads GPSKIKEDTA…WSLLSFLKLK (177 aa). The short motif at 554 to 557 is the DEGH box element; that stretch reads DEGH. At T733 the chain carries Phosphothreonine. The RING-type zinc-finger motif lies at 757–798; that stretch reads CAICLDSLTVPVITHCAHVFCKPCICQCIQNEQPHAKCPLCR. 2 required for interaction with the RFBP isoform of ATP11B regions span residues 767–772 and 791–796; these read PVITHC and HAKCPL. Residues 834 to 999 form the Helicase C-terminal domain; it reads ALMHALIDLR…EMKQAKINEI (166 aa). Residues 922–1005 form an interaction with SP1 and SP3 region; that stretch reads SRVFLMDPAW…INEIRTLIDL (84 aa).

This sequence belongs to the SNF2/RAD54 helicase family. RAD16 subfamily. Interacts with SP1 and SP3 independently of DNA; the interaction with these transcriptional factors may be required for basal transcription of target genes. Interacts (via the RING-finger) with isoform RFBP of ATP11B. Progesterone-dependent isoform 1 interacts with EGR1; the interaction requires prior binding to DNA and represses c-Rel via a DNA looping mechanism. Interacts with GATA4. Interacts with PCNA; the interaction promotes polyubiquitination of PCNA through association with the UBE2B-RAD18 and UBE2V2-UBE2N ubiquitin ligase complexes. Interacts with RAD18, SHPRH, UBE2V2 and UBE2N. In terms of processing, phosphorylated on serine, threonine, and tyrosine residues. Tyr-195 phosphorylation is catalyzed by JAK2 in response to prolactin treatment. It is required for DNA binding. Isoform 1 is expressed preferentially in bladder, cervix, diaphragm, duodenum, epididymis, heart, kidney, liver, lung, ovary (granulosa cells), prostate, spleen, testis (predominantly in the Sertoli cells of the seminiferous tubules) and vagina. Isoform 2 is expressed preferentially in lactating mammary gland and uterine endometrium.

Its subcellular location is the cytoplasm. It is found in the nucleus. The protein localises to the nucleolus. It localises to the nucleoplasm. It carries out the reaction S-ubiquitinyl-[E2 ubiquitin-conjugating enzyme]-L-cysteine + [acceptor protein]-L-lysine = [E2 ubiquitin-conjugating enzyme]-L-cysteine + N(6)-ubiquitinyl-[acceptor protein]-L-lysine.. The protein operates within protein modification; protein ubiquitination. Functionally, has both helicase and E3 ubiquitin ligase activities. Possesses intrinsic ATP-dependent nucleosome-remodeling activity. This activity may be required for transcriptional activation or repression of specific target promoters. These may include the SERPINE1, to which this protein can bind directly. Mediates repression by c-Rel through a DNA-looping mechanism. Plays a role in error-free postreplication repair (PRR) of damaged DNA and maintains genomic stability through acting as a ubiquitin ligase for 'Lys-63'-linked polyubiquitination of chromatin-bound PCNA. Transcriptional regulator that mediates the ability of prolactin to augment progesterone-dependent transcription of the SCGB1A1/uteroglobin gene through a bipartite progesterone receptor half-site/overlapping Y-box combination (-38/-26) where progesterone activation is attenuated by nuclear factor Y binding. Regulation also involves two GC-rich sequences in the proximal promoter (positions -162/+90) and a RUSH/SMARCA3 site (positions -616/-611) in the 5'-untranslated region. The sequence is that of Helicase-like transcription factor (HLTF) from Oryctolagus cuniculus (Rabbit).